Here is a 443-residue protein sequence, read N- to C-terminus: Protein AknT (443 aa).

Belongs to the cytochrome P450 family.

Involved in the biosynthesis of the anthracycline antitumor agent aclacinomycin A. AknT is required for the glycosylation of aklavinone aglycone by AknS to yield aclacinomycin T (rhodosaminyl-aklavinone). The sequence is that of Protein AknT from Streptomyces galilaeus.